Reading from the N-terminus, the 297-residue chain is HTH-type transcriptional regulator ArgP (297 aa).

An HTH lysR-type domain is found at 4-60 (PDYRTLQALDAVIRERGFERAAQKLCITQSAVSQRIKQLENMFGQPLLVRTVPPRPT). A DNA-binding region (H-T-H motif) is located at residues 21 to 40 (FERAAQKLCITQSAVSQRIK).

It belongs to the LysR transcriptional regulatory family. Homodimer.

Functionally, controls the transcription of genes involved in arginine and lysine metabolism. The polypeptide is HTH-type transcriptional regulator ArgP (Salmonella typhi).